The sequence spans 317 residues: tRNA pseudouridine synthase B (317 aa).

Asp47 serves as the catalytic Nucleophile.

The protein belongs to the pseudouridine synthase TruB family. Type 1 subfamily.

It catalyses the reaction uridine(55) in tRNA = pseudouridine(55) in tRNA. In terms of biological role, responsible for synthesis of pseudouridine from uracil-55 in the psi GC loop of transfer RNAs. This chain is tRNA pseudouridine synthase B, found in Shewanella sp. (strain ANA-3).